A 314-amino-acid polypeptide reads, in one-letter code: Lipoyl synthase (314 aa).

[4Fe-4S] cluster is bound by residues cysteine 60, cysteine 65, cysteine 71, cysteine 86, cysteine 90, cysteine 93, and serine 300. The Radical SAM core domain occupies 72 to 289; that stretch reads FRKGTATFMI…RQFGLSIGFS (218 aa).

It belongs to the radical SAM superfamily. Lipoyl synthase family. Requires [4Fe-4S] cluster as cofactor.

Its subcellular location is the cytoplasm. The catalysed reaction is [[Fe-S] cluster scaffold protein carrying a second [4Fe-4S](2+) cluster] + N(6)-octanoyl-L-lysyl-[protein] + 2 oxidized [2Fe-2S]-[ferredoxin] + 2 S-adenosyl-L-methionine + 4 H(+) = [[Fe-S] cluster scaffold protein] + N(6)-[(R)-dihydrolipoyl]-L-lysyl-[protein] + 4 Fe(3+) + 2 hydrogen sulfide + 2 5'-deoxyadenosine + 2 L-methionine + 2 reduced [2Fe-2S]-[ferredoxin]. It functions in the pathway protein modification; protein lipoylation via endogenous pathway; protein N(6)-(lipoyl)lysine from octanoyl-[acyl-carrier-protein]: step 2/2. In terms of biological role, catalyzes the radical-mediated insertion of two sulfur atoms into the C-6 and C-8 positions of the octanoyl moiety bound to the lipoyl domains of lipoate-dependent enzymes, thereby converting the octanoylated domains into lipoylated derivatives. The protein is Lipoyl synthase of Pelobacter propionicus (strain DSM 2379 / NBRC 103807 / OttBd1).